Reading from the N-terminus, the 1012-residue chain is Ankyrin repeat- and BTB/POZ domain-containing protein 3-B (1012 aa).

A helical membrane pass occupies residues 160–180; the sequence is ILSWTISVNCIAASLSALSMY. ANK repeat units lie at residues 511-540, 557-586, and 595-624; these read QGMTPLMYACVRGDEAMVQMLLDAGADINS, RQATPLTFAVLHQHIPVVQLLLDAGANVEG, and YTETPLQLASAAGNFELVSLLLERGADPMI. Positions 831–897 constitute a BTB domain; the sequence is SDVTFLVEGK…LYCGGTDALH (67 aa).

The protein localises to the membrane. The protein is Ankyrin repeat- and BTB/POZ domain-containing protein 3-B (abtb3b) of Danio rerio (Zebrafish).